We begin with the raw amino-acid sequence, 449 residues long: tRNA-2-methylthio-N(6)-dimethylallyladenosine synthase (449 aa).

Residues 3–124 (KMLYIKTYGC…LPTMLEKLDS (122 aa)) form the MTTase N-terminal domain. [4Fe-4S] cluster-binding residues include cysteine 12, cysteine 48, cysteine 87, cysteine 163, cysteine 167, and cysteine 170. A Radical SAM core domain is found at 149-380 (KSPTVSGLVS…QAQLMLQQLE (232 aa)). Residues 383–447 (QKLIGKVVPV…ASSLFGEVCP (65 aa)) enclose the TRAM domain.

This sequence belongs to the methylthiotransferase family. MiaB subfamily. As to quaternary structure, monomer. The cofactor is [4Fe-4S] cluster.

It localises to the cytoplasm. The catalysed reaction is N(6)-dimethylallyladenosine(37) in tRNA + (sulfur carrier)-SH + AH2 + 2 S-adenosyl-L-methionine = 2-methylsulfanyl-N(6)-dimethylallyladenosine(37) in tRNA + (sulfur carrier)-H + 5'-deoxyadenosine + L-methionine + A + S-adenosyl-L-homocysteine + 2 H(+). Functionally, catalyzes the methylthiolation of N6-(dimethylallyl)adenosine (i(6)A), leading to the formation of 2-methylthio-N6-(dimethylallyl)adenosine (ms(2)i(6)A) at position 37 in tRNAs that read codons beginning with uridine. This Orientia tsutsugamushi (strain Boryong) (Rickettsia tsutsugamushi) protein is tRNA-2-methylthio-N(6)-dimethylallyladenosine synthase.